Reading from the N-terminus, the 490-residue chain is Tegument protein VP16 (490 aa).

The tract at residues aspartate 11 to leucine 35 is disordered. Phosphoserine occurs at positions 16, 351, 411, and 453. Positions serine 411–glycine 490 are transcriptional activation.

The protein belongs to the herpesviridae tegument protein VP16 protein family. In terms of assembly, interacts with VP22. Interacts with gH (via C-terminus). Interacts with the virion host shutoff protein (vhs). Interacts with VP11/12. Associates with the VP16-induced complex; binding to host HCFC1 activates VP16 for association with the octamer motif-binding host protein POU2F1, to form a multiprotein-DNA complex responsible for activating transcription of the viral immediate early genes.

The protein localises to the virion tegument. Its subcellular location is the host nucleus. In terms of biological role, transcriptional activator of immediate-early (IE) gene products (alpha genes). Acts as a key activator of lytic infection by initiating the lytic program through the assembly of the transcriptional regulatory VP16-induced complex composed of VP16 and two cellular factors, HCFC1 and POU2F 1. VP16-induced complex represents a regulatory switch: when it is on, it promotes IE-gene expression and thus lytic infection, and when it is off, it limits IE-gene transcription favoring latent infection. May play a role in the aggregation of tegument proteins around nucleocapsids during virus morphogenesis. This is Tegument protein VP16 from Human herpesvirus 2 (strain 333) (HHV-2).